The primary structure comprises 475 residues: Methylenomycin A resistance protein (475 aa).

14 consecutive transmembrane segments (helical) span residues I28–A48, W65–A85, V93–T113, V123–F143, M152–G172, L173–I193, L212–I232, T240–L260, L285–F305, F314–Y334, L346–A366, W371–M391, Q416–W436, and G439–W459.

It belongs to the major facilitator superfamily.

Its subcellular location is the cell membrane. Functionally, resistance to the epoxide antibiotic methylenomycin A; probably by mediating its efflux. The chain is Methylenomycin A resistance protein (mmr) from Streptomyces coelicolor (strain ATCC BAA-471 / A3(2) / M145).